The primary structure comprises 238 residues: Adenylate dimethylallyltransferase (238 aa).

It belongs to the isopentenyl transferase family.

It carries out the reaction dimethylallyl diphosphate + AMP = N(6)-(dimethylallyl)adenosine 5'-phosphate + diphosphate. Transfers dimethylallyl groups to AMP as part of the biosynthesis of cytokinin phytohormones. The chain is Adenylate dimethylallyltransferase (tzs) from Ralstonia nicotianae (strain ATCC BAA-1114 / GMI1000) (Ralstonia solanacearum).